The following is a 159-amino-acid chain: Transcription elongation factor GreA (159 aa).

A coiled-coil region spans residues 14-76 (VKKLEEELEY…QLENMLRNAN (63 aa)).

This sequence belongs to the GreA/GreB family.

Necessary for efficient RNA polymerase transcription elongation past template-encoded arresting sites. The arresting sites in DNA have the property of trapping a certain fraction of elongating RNA polymerases that pass through, resulting in locked ternary complexes. Cleavage of the nascent transcript by cleavage factors such as GreA or GreB allows the resumption of elongation from the new 3'terminus. GreA releases sequences of 2 to 3 nucleotides. This Clostridium novyi (strain NT) protein is Transcription elongation factor GreA.